Here is a 116-residue protein sequence, read N- to C-terminus: SPbeta prophage-derived uncharacterized protein YoqA (116 aa).

This Bacillus subtilis (strain 168) protein is SPbeta prophage-derived uncharacterized protein YoqA (yoqA).